The following is a 391-amino-acid chain: Chaperone protein DnaJ (391 aa).

A J domain is found at 4–68 (DFYDVLGVSR…ETRQQYDQLG (65 aa)). Basic and acidic residues predominate over residues 53 to 79 (DVLTDEETRQQYDQLGHERFEEAEKRG). Disordered regions lie at residues 53–94 (DVLT…MGGA) and 117–136 (FFGGAGGGGGRGRSGPEQGR). 2 stretches are compositionally biased toward gly residues: residues 81 to 94 (TGNGGGGAGGMGGA) and 119 to 129 (GGAGGGGGRGR). The CR-type zinc finger occupies 152–234 (GVSKQVTVRR…CGGQGQTRER (83 aa)). Zn(2+) contacts are provided by Cys165, Cys168, Cys182, Cys185, Cys208, Cys211, Cys222, and Cys225. CXXCXGXG motif repeat units follow at residues 165-172 (CADCGGSG), 182-189 (CPQCDGQG), 208-215 (CSRCGGEG), and 222-229 (CSTCGGQG).

Belongs to the DnaJ family. In terms of assembly, homodimer. Zn(2+) is required as a cofactor.

The protein localises to the cytoplasm. Participates actively in the response to hyperosmotic and heat shock by preventing the aggregation of stress-denatured proteins and by disaggregating proteins, also in an autonomous, DnaK-independent fashion. Unfolded proteins bind initially to DnaJ; upon interaction with the DnaJ-bound protein, DnaK hydrolyzes its bound ATP, resulting in the formation of a stable complex. GrpE releases ADP from DnaK; ATP binding to DnaK triggers the release of the substrate protein, thus completing the reaction cycle. Several rounds of ATP-dependent interactions between DnaJ, DnaK and GrpE are required for fully efficient folding. Also involved, together with DnaK and GrpE, in the DNA replication of plasmids through activation of initiation proteins. In Halobacterium salinarum (strain ATCC 29341 / DSM 671 / R1), this protein is Chaperone protein DnaJ.